A 229-amino-acid polypeptide reads, in one-letter code: MNNININIKIIKKKIQYFLKKNNYPLKKIKIIAVSKNQGIDKIKLAISSGIHEFGENYVQEGIDKIQKLKKYQNIIWHFIGKVQSNKTKIIAENFDWCQTIDREKIAILLNKYREKKSFPMNVLMQINISNEVTKNGICIKNYKKLAKTISLMPNLNFRGIMMMPEVEKKMIKQNDNYKNGNFIFNELKKEYQSIDTLSLGTSFDIENALLFHSNMIRIGRFIFKNQVR.

Lys-36 carries the post-translational modification N6-(pyridoxal phosphate)lysine.

Belongs to the pyridoxal phosphate-binding protein YggS/PROSC family. As to quaternary structure, monomer.

Functionally, pyridoxal 5'-phosphate (PLP)-binding protein, which is involved in PLP homeostasis. In Buchnera aphidicola subsp. Schizaphis graminum (strain Sg), this protein is Pyridoxal phosphate homeostasis protein.